The following is a 136-amino-acid chain: Protein LITTLE ZIPPER 1 (136 aa).

Residues 97–122 (ENQNIIRENEKLKKKALLLHQENKTL) are a coiled coil.

Interacts with REV. As to expression, expressed in the adaxial epidermis of the cotyledons and in the vascular cylinder of wild-type torpedo stage embryos.

Competitive inhibitor of the HD-ZIPIII transcription factors in shoot apical meristem (SAM) development. Acts by forming non-functional heterodimers. Part of a negative feedback loop. Essential for proper functioning of stem cells in the SAM. This chain is Protein LITTLE ZIPPER 1, found in Arabidopsis thaliana (Mouse-ear cress).